Here is a 242-residue protein sequence, read N- to C-terminus: uncharacterized protein (242 aa).

To E.coli MazG and to plasmid pIP1100 erythromycin esterase.

This is an uncharacterized protein from Streptomyces cacaoi.